The sequence spans 185 residues: Chromobox protein homolog 1 (185 aa).

Glycyl lysine isopeptide (Lys-Gly) (interchain with G-Cter in SUMO2) cross-links involve residues Lys-9 and Lys-33. Positions 21–79 constitute a Chromo 1 domain; that stretch reads YVVEKVLDRRVVKGKVEYLLKWKGFSDEDNTWEPEENLDCPDLIAEFLQSQKTAHETDK. Positions 63 to 124 are disordered; sequence LIAEFLQSQK…RGLEPERIIG (62 aa). Residues 73–89 show a composition bias toward basic and acidic residues; sequence TAHETDKSEGGKRKADS. Residues Ser-89 and Ser-91 each carry the phosphoserine modification. The segment covering 96–121 has biased composition (basic and acidic residues); it reads EESKPKKKKEESEKPRGFARGLEPER. Glycyl lysine isopeptide (Lys-Gly) (interchain with G-Cter in SUMO2) cross-links involve residues Lys-99 and Lys-150. The 59-residue stretch at 117–175 folds into the Chromo 2; shadow subtype domain; sequence LEPERIIGATDSSGELMFLMKWKNSDEADLVPAKEANVKCPQVVISFYEERLTWHSYPS. Residue Ser-175 is modified to Phosphoserine.

In terms of assembly, homodimer. Interacts directly with CHAF1A, EMSY, LBR, TIF1/TIF1A and TRIM28/TIF1B PXVXL motif via the chromoshadow domain. Interacts directly with histone H3 methylated at 'Lys-9' via the chromo domain. Interacts with SUV39H1 and SETDB1, KMT5B and KMT5C. Interacts with PRDM6. Interacts with POGZ. Interacts with CHAMP1. Interacts with INCENP. Interacts with SGO1; the CBX1 homodimer binds to one molecule of SGO1. Interacts with LRIF1 (via PxVxL motif). Interacts with HDGFL2. Interacts with CHD3. Interacts with CHD4. Not phosphorylated. In terms of processing, ubiquitinated. As to expression, expressed in all adult and embryonic tissues.

It is found in the nucleus. In terms of biological role, component of heterochromatin. Recognizes and binds histone H3 tails methylated at 'Lys-9', leading to epigenetic repression. Interaction with lamin B receptor (LBR) can contribute to the association of the heterochromatin with the inner nuclear membrane. In Homo sapiens (Human), this protein is Chromobox protein homolog 1 (CBX1).